Consider the following 508-residue polypeptide: Maturase K (508 aa).

It belongs to the intron maturase 2 family. MatK subfamily.

Its subcellular location is the plastid. The protein localises to the chloroplast. Functionally, usually encoded in the trnK tRNA gene intron. Probably assists in splicing its own and other chloroplast group II introns. The protein is Maturase K of Chaetosphaeridium globosum (Charophycean green alga).